The primary structure comprises 83 residues: Putative beta-neurotoxin RjAa10f (83 aa).

Positions 1-18 are cleaved as a signal peptide; sequence MKILIFIIASFMLIGVWC. The 64-residue stretch at 19 to 82 folds into the LCN-type CS-alpha/beta domain; the sequence is KEGYPMGRDG…VWDPNNNKCV (64 aa). 4 cysteine pairs are disulfide-bonded: cysteine 29–cysteine 81, cysteine 33–cysteine 55, cysteine 40–cysteine 62, and cysteine 44–cysteine 64.

This sequence belongs to the long (4 C-C) scorpion toxin superfamily. Sodium channel inhibitor family. Beta subfamily. As to expression, expressed by the venom gland.

It localises to the secreted. In terms of biological role, beta toxins bind voltage-independently at site-4 of sodium channels (Nav) and shift the voltage of activation toward more negative potentials thereby affecting sodium channel activation and promoting spontaneous and repetitive firing. The sequence is that of Putative beta-neurotoxin RjAa10f from Rhopalurus junceus (Caribbean blue scorpion).